A 444-amino-acid polypeptide reads, in one-letter code: 3-isopropylmalate dehydratase large subunit (444 aa).

3 residues coordinate [4Fe-4S] cluster: cysteine 348, cysteine 408, and cysteine 411.

This sequence belongs to the aconitase/IPM isomerase family. LeuC type 1 subfamily. As to quaternary structure, heterodimer of LeuC and LeuD. [4Fe-4S] cluster serves as cofactor.

The enzyme catalyses (2R,3S)-3-isopropylmalate = (2S)-2-isopropylmalate. The protein operates within amino-acid biosynthesis; L-leucine biosynthesis; L-leucine from 3-methyl-2-oxobutanoate: step 2/4. Its function is as follows. Catalyzes the isomerization between 2-isopropylmalate and 3-isopropylmalate, via the formation of 2-isopropylmaleate. This Buchnera aphidicola subsp. Uroleucon ambrosiae protein is 3-isopropylmalate dehydratase large subunit.